The primary structure comprises 328 residues: Malate dehydrogenase (328 aa).

11–17 (GAAGQIG) serves as a coordination point for NAD(+). Substrate is bound by residues R94 and R100. NAD(+) contacts are provided by residues N107, Q114, and 131–133 (VGN). Substrate contacts are provided by N133 and R164. H189 functions as the Proton acceptor in the catalytic mechanism.

Belongs to the LDH/MDH superfamily. MDH type 2 family.

The enzyme catalyses (S)-malate + NAD(+) = oxaloacetate + NADH + H(+). Its function is as follows. Catalyzes the reversible oxidation of malate to oxaloacetate. The sequence is that of Malate dehydrogenase from Xylella fastidiosa (strain 9a5c).